Here is a 575-residue protein sequence, read N- to C-terminus: Amyloid-beta A4 precursor protein-binding family A member 3 (575 aa).

Residue Met1 is modified to N-acetylmethionine. Residues Met1–Pro10 show a composition bias toward polar residues. 2 disordered regions span residues Met1 to Met50 and Cys118 to Asp211. The residue at position 11 (Ser11) is a Phosphoserine. Residues Glu143 to Glu153 are compositionally biased toward acidic residues. A compositionally biased stretch (low complexity) spans Glu156–Pro184. Ser171 is subject to Phosphoserine. Residues Leu215–Pro364 form a required for interaction with NECAB3 region. Residues Asp217–Gly381 enclose the PID domain. Phosphoserine is present on Ser372. 2 consecutive PDZ domains span residues Glu394 to Cys480 and Thr485 to Ala560.

In terms of assembly, binds to the cytoplasmic domain of amyloid protein (APP) in vivo. Interacts with HIF1AN (via N-terminus). Interacts with NECAB3; seems to mediate the interaction between NECAB3 and HIF1AN. Expressed in all tissues examined with lower levels in brain and testis.

The protein resides in the cytoplasm. The protein localises to the perinuclear region. May modulate processing of the amyloid-beta precursor protein (APP) and hence formation of APP-beta. May enhance the activity of HIF1A in macrophages by inhibiting the activity of HIF1AN. This is Amyloid-beta A4 precursor protein-binding family A member 3 (APBA3) from Homo sapiens (Human).